Consider the following 176-residue polypeptide: dCTP deaminase (176 aa).

DCTP-binding positions include 99-104 (RSTLAR) and aspartate 115. Catalysis depends on glutamate 125, which acts as the Proton donor/acceptor. Glutamine 163 serves as a coordination point for dCTP.

It belongs to the dCTP deaminase family. Homotrimer.

The enzyme catalyses dCTP + H2O + H(+) = dUTP + NH4(+). It participates in pyrimidine metabolism; dUMP biosynthesis; dUMP from dCTP (dUTP route): step 1/2. Its function is as follows. Catalyzes the deamination of dCTP to dUTP. The chain is dCTP deaminase from Pyrobaculum aerophilum (strain ATCC 51768 / DSM 7523 / JCM 9630 / CIP 104966 / NBRC 100827 / IM2).